A 91-amino-acid polypeptide reads, in one-letter code: Hepcidin-2 (91 aa).

A signal peptide spans 1–24 (MKLSNVFLAAVVILTCVCVFQITA). The propeptide occupies 25–64 (VPFIQQVQDEHHVESEELQENQHLTEAEHRLTDPLVLFRT). 4 disulfides stabilise this stretch: cysteine 73–cysteine 89, cysteine 76–cysteine 79, cysteine 77–cysteine 85, and cysteine 80–cysteine 88.

The protein belongs to the hepcidin family.

Its subcellular location is the secreted. Seems to act as a signaling molecule involved in the maintenance of iron homeostasis. Seems to be required in conjunction with HFE to regulate both intestinal iron absorption and iron storage in macrophages. May also have antimicrobial activity. The protein is Hepcidin-2 (hamp2) of Danio rerio (Zebrafish).